The primary structure comprises 196 residues: MAASVFCCLRWCRDGGAGHIPLKEMPAVQLDTQRMGTDVVIVKNGRRICGTGGCLANAPLHQNKSYFEFKIQSTGIWGIGVATQKANLNQIPLGRDVHSLVMRNDGALYYNNEEKNRLPANSLPQEGDVVGITYDHVELNVYLNGKNMHCPASGIRGTVYPVVYVDDSAILDCQFSEFYHTPPPGFEKILFEQQIF.

The B30.2/SPRY domain maps to 1 to 184; that stretch reads MAASVFCCLR…FSEFYHTPPP (184 aa).

This Gallus gallus (Chicken) protein is SPRY domain-containing protein 7 (SPRYD7).